A 181-amino-acid chain; its full sequence is ATP-dependent protease subunit HslV (181 aa).

Residue Thr5 is part of the active site. Residues Ala161, Cys164, and Thr167 each contribute to the Na(+) site.

This sequence belongs to the peptidase T1B family. HslV subfamily. In terms of assembly, a double ring-shaped homohexamer of HslV is capped on each side by a ring-shaped HslU homohexamer. The assembly of the HslU/HslV complex is dependent on binding of ATP.

The protein resides in the cytoplasm. It carries out the reaction ATP-dependent cleavage of peptide bonds with broad specificity.. With respect to regulation, allosterically activated by HslU binding. In terms of biological role, protease subunit of a proteasome-like degradation complex believed to be a general protein degrading machinery. The sequence is that of ATP-dependent protease subunit HslV from Sulfurimonas denitrificans (strain ATCC 33889 / DSM 1251) (Thiomicrospira denitrificans (strain ATCC 33889 / DSM 1251)).